The following is a 91-amino-acid chain: Elongation factor 1-beta (91 aa).

The protein belongs to the EF-1-beta/EF-1-delta family.

Its function is as follows. Promotes the exchange of GDP for GTP in EF-1-alpha/GDP, thus allowing the regeneration of EF-1-alpha/GTP that could then be used to form the ternary complex EF-1-alpha/GTP/AAtRNA. The protein is Elongation factor 1-beta (ef1b) of Pyrococcus abyssi (strain GE5 / Orsay).